The following is an 862-amino-acid chain: MGAQVSTQKTGAHETLLEAAQGATINYTNINYYKDAASNSANRQDFSQDPSKFTEPVKDIMIKSMPALNSPSAEECGYSDRVRSITLGNSTITTQESANVVVAYGRWPKYLEDDQATAEDQPTQPDVATCRFYTLESVQWEANSAGWWWKFPEALKDMGLFGQNMYYHYLGRAGYTIHVQCNASKFHQGCLLVVCVPEAEMGCAKPDENVDATNLTNGENTCELTAGAAPAEKGKVQTAVCNATMGVAVGNLTIFPHQWINLRTNNCATIVMPYINSVPMDNMFRHYNFTLMVIPFVPLTSMGGSTYVPITVTIAPMCAEYNGLRLSTQHQGLPVMNVPGSNQFLTSDNFQSPCAMPEYDVTPPLDIPGEVNNLMEVAEVDSVVPVNNLSDNVKTIKAYQIPVSAGDSSRPEAVFKFQLDPGSGSVLKHTLLGEIINYYAHWSGSIKLTFVFCGSAMATGKLLIAYSPPGASAPATRKDAMLGTHIIWDLGLQSSCVLCVPWISQTHYRMVERDEYTTAGYISCWYQTNIIVPPDTPSQCYMLCLASACNDFSVRMLKDTPFIQQEAKLQGEPGKAIESAISRVADTISSGPTNSEQVPALTAAETGHTSQVVPGDTIQTRHVKNYHSRSESTIENFLCRSACVHIARYEAGANASNEDRFVRWEINNKELVQLRRKCEMFTYLRYDVEVTFVITSQQDQGTDLSQDMPVLTHQVMYVPPGGSVTKQGDSYAWQTSTNPSVFWTEGNAPPRMSIPFISIGNAYSSFYDGWSHFSQKGVYGYNTLNKMGTLFVRHVNKETPKPVTSTVRVYFKPKHIRAWIPRPPRLCPYKYKANVNFDVTAITDSRLTITTVPQVEHNLRTA.

The N-myristoyl glycine; by host moiety is linked to residue glycine 2.

Belongs to the picornaviruses polyprotein family. As to quaternary structure, interacts with capsid protein VP1 and capsid protein VP3 to form heterotrimeric protomers. In terms of assembly, interacts with capsid protein VP0, and capsid protein VP3 to form heterotrimeric protomers. Five protomers subsequently associate to form pentamers which serve as building blocks for the capsid. Interacts with capsid protein VP2, capsid protein VP3 and capsid protein VP4 following cleavage of capsid protein VP0. Interacts with capsid protein VP1 and capsid protein VP3 in the mature capsid. As to quaternary structure, interacts with capsid protein VP0 and capsid protein VP1 to form heterotrimeric protomers. Five protomers subsequently associate to form pentamers which serve as building blocks for the capsid. Interacts with capsid protein VP4 in the mature capsid. Interacts with protein 2C; this interaction may be important for virion morphogenesis. In terms of assembly, interacts with capsid protein VP1 and capsid protein VP3. Post-translationally, specific enzymatic cleavages in vivo by the viral proteases yield processing intermediates and the mature proteins. In terms of processing, myristoylation is required for the formation of pentamers during virus assembly. Further assembly of 12 pentamers and a molecule of genomic RNA generates the provirion. During virion maturation, immature virions are rendered infectious following cleavage of VP0 into VP4 and VP2. This maturation seems to be an autocatalytic event triggered by the presence of RNA in the capsid and it is followed by a conformational change infectious virion. Post-translationally, myristoylation is required during RNA encapsidation and formation of the mature virus particle.

The protein resides in the virion. Its subcellular location is the host cytoplasm. Forms an icosahedral capsid of pseudo T=3 symmetry with capsid proteins VP2 and VP3. The capsid is 300 Angstroms in diameter, composed of 60 copies of each capsid protein and enclosing the viral positive strand RNA genome. Capsid protein VP1 mainly forms the vertices of the capsid. Capsid protein VP1 interacts with host cell receptor to provide virion attachment to target host cells. This attachment induces virion internalization. Tyrosine kinases are probably involved in the entry process. After binding to its receptor, the capsid undergoes conformational changes. Capsid protein VP1 N-terminus (that contains an amphipathic alpha-helix) and capsid protein VP4 are externalized. Together, they shape a pore in the host membrane through which viral genome is translocated to host cell cytoplasm. Functionally, forms an icosahedral capsid of pseudo T=3 symmetry with capsid proteins VP2 and VP3. The capsid is 300 Angstroms in diameter, composed of 60 copies of each capsid protein and enclosing the viral positive strand RNA genome. In terms of biological role, lies on the inner surface of the capsid shell. After binding to the host receptor, the capsid undergoes conformational changes. Capsid protein VP4 is released, Capsid protein VP1 N-terminus is externalized, and together, they shape a pore in the host membrane through which the viral genome is translocated into the host cell cytoplasm. Its function is as follows. Component of immature procapsids, which is cleaved into capsid proteins VP4 and VP2 after maturation. Allows the capsid to remain inactive before the maturation step. This Echovirus 16 (strain Harrington) protein is Genome polyprotein.